A 274-amino-acid chain; its full sequence is Thiamine kinase (274 aa).

This sequence belongs to the thiamine kinase family.

It carries out the reaction thiamine + ATP = thiamine phosphate + ADP + H(+). Its pathway is cofactor biosynthesis; thiamine diphosphate biosynthesis; thiamine phosphate from thiamine: step 1/1. Its function is as follows. Catalyzes the ATP-dependent phosphorylation of thiamine to thiamine phosphate. Is involved in thiamine salvage. This Salmonella heidelberg (strain SL476) protein is Thiamine kinase.